The primary structure comprises 163 residues: Acetolactate synthase isozyme 3 small subunit (163 aa).

The ACT domain maps to 4–78 (ILSVLLENES…DVLRVSELGQ (75 aa)).

It belongs to the acetolactate synthase small subunit family. As to quaternary structure, dimer of large and small chains.

It carries out the reaction 2 pyruvate + H(+) = (2S)-2-acetolactate + CO2. The protein operates within amino-acid biosynthesis; L-isoleucine biosynthesis; L-isoleucine from 2-oxobutanoate: step 1/4. It functions in the pathway amino-acid biosynthesis; L-valine biosynthesis; L-valine from pyruvate: step 1/4. With respect to regulation, sensitive to valine inhibition. The polypeptide is Acetolactate synthase isozyme 3 small subunit (ilvH) (Salmonella typhimurium (strain LT2 / SGSC1412 / ATCC 700720)).